The sequence spans 289 residues: Glycine--tRNA ligase alpha subunit (289 aa).

It belongs to the class-II aminoacyl-tRNA synthetase family. In terms of assembly, tetramer of two alpha and two beta subunits.

The protein resides in the cytoplasm. It catalyses the reaction tRNA(Gly) + glycine + ATP = glycyl-tRNA(Gly) + AMP + diphosphate. The protein is Glycine--tRNA ligase alpha subunit of Prochlorococcus marinus subsp. pastoris (strain CCMP1986 / NIES-2087 / MED4).